The chain runs to 117 residues: MPRVKRGVQARARHKKVLKQAKGYYGARSRVYRVAFQAVTKAGQYAYRDRRNKKRVFRQLWIARINAAARQNEMSYSRFINGLKKASIEIDRKILADIAVFDKVAFAALVEKAKAAL.

The protein belongs to the bacterial ribosomal protein bL20 family.

In terms of biological role, binds directly to 23S ribosomal RNA and is necessary for the in vitro assembly process of the 50S ribosomal subunit. It is not involved in the protein synthesizing functions of that subunit. The sequence is that of Large ribosomal subunit protein bL20 from Aliivibrio fischeri (strain ATCC 700601 / ES114) (Vibrio fischeri).